The chain runs to 414 residues: Eukaryotic initiation factor 4A-1 (414 aa).

The Q motif signature appears at 41-69; the sequence is ESFDDMGLQENLLRGIYAYGFEKPSAIQQ. The Helicase ATP-binding domain maps to 72-242; that stretch reads IVPFCKGLDV…RKFMNKPVRI (171 aa). 85-92 contributes to the ATP binding site; sequence AQSGTGKT. The short motif at 190–193 is the DEAD box element; that stretch reads DEAD. In terms of domain architecture, Helicase C-terminal spans 253 to 414; sequence GIKQFYVNVE…ELPANVADLL (162 aa).

This sequence belongs to the DEAD box helicase family. eIF4A subfamily. In terms of assembly, eIF4F is a multi-subunit complex, the composition of which varies with external and internal environmental conditions. It is composed of at least EIF4A, EIF4E and EIF4G.

It catalyses the reaction ATP + H2O = ADP + phosphate + H(+). ATP-dependent RNA helicase which is a subunit of the eIF4F complex involved in cap recognition and is required for mRNA binding to ribosome. In the current model of translation initiation, eIF4A unwinds RNA secondary structures in the 5'-UTR of mRNAs which is necessary to allow efficient binding of the small ribosomal subunit, and subsequent scanning for the initiator codon. In Oryza sativa subsp. japonica (Rice), this protein is Eukaryotic initiation factor 4A-1.